The sequence spans 102 residues: ATP-dependent Clp protease adapter protein ClpS (102 aa).

This sequence belongs to the ClpS family. In terms of assembly, binds to the N-terminal domain of the chaperone ClpA.

Its function is as follows. Involved in the modulation of the specificity of the ClpAP-mediated ATP-dependent protein degradation. The sequence is that of ATP-dependent Clp protease adapter protein ClpS from Aromatoleum aromaticum (strain DSM 19018 / LMG 30748 / EbN1) (Azoarcus sp. (strain EbN1)).